A 517-amino-acid polypeptide reads, in one-letter code: Beclin-1-like protein (517 aa).

The disordered stretch occupies residues 76 to 106 (LPRHKPPQSQGIPPRPRGASSPQPDATQSGK). Positions 95–105 (SSPQPDATQSG) are enriched in polar residues. The stretch at 172–266 (CLECMRVLSD…NRFNELEDRY (95 aa)) forms a coiled coil.

Belongs to the beclin family. Component of a phosphatidylinositol 3-kinase (PI3K) complex composed of ATG6, SH3P2 and FREE1. Interacts with SINAT1, SINAT2, SINAT5, SINAT6, TRAF1A and TRAF1B. Interacts with TUBB8/TUB8. Component of a complex made of VPS38/USL1 and PI3K main subunits such as VPS15, ATG6/VPS30 and VPS34. Binds directly to VPS38/USL1. Post-translationally, ubiquitinated. The interaction with SINAT1 or SINAT2, and the presence of TRAF1A/MUSE14 and TRAF1B/MUSE13, mediates its proteasome-dependent degradation. Highly expressed in mature pollen grains. Expressed in roots, leaves, stems, flowers and siliques.

It is found in the cytoplasm. The protein resides in the cytoskeleton. Required for normal plant development. Required for pollen germination. Required for autophagic activity. Required to limit the pathogen-associated cell death response. May be involved in vacuolar protein sorting. Binds to microtubules. May facilitate efficient recruitment of other ATG proteins to assemble scaffolds for autophagosome biogenesis. This Arabidopsis thaliana (Mouse-ear cress) protein is Beclin-1-like protein.